A 318-amino-acid polypeptide reads, in one-letter code: ZAR1-like protein (318 aa).

The interval 149–211 (LSDPPEAGQP…PVDSSQPLGR (63 aa)) is disordered. Positions 155-169 (AGQPPPPLPPPSPPP) are enriched in pro residues. A 3CxxC-type zinc finger spans residues 219-304 (PKYGYFHCKD…QELCGRCKDK (86 aa)).

This sequence belongs to the ZAR1 family. In terms of assembly, interacts with YBX2.

Its subcellular location is the cytoplasm. The protein localises to the cytoplasmic ribonucleoprotein granule. Its function is as follows. mRNA-binding protein required for maternal mRNA storage, translation and degradation during oocyte maturation. Probably promotes formation of some phase-separated membraneless compartment that stores maternal mRNAs in oocytes: acts by undergoing liquid-liquid phase separation upon binding to maternal mRNAs. Binds to the 3'-UTR of maternal mRNAs, inhibiting their translation. The protein is ZAR1-like protein (ZAR1L) of Bos taurus (Bovine).